The chain runs to 299 residues: Probable lipid kinase YegS (299 aa).

The DAGKc domain occupies 2–133 (AEFPASLLIL…IDMAQVNKQT (132 aa)). Residues T40, 66–72 (GDGTINE), and T95 contribute to the ATP site. Mg(2+) contacts are provided by L215, D218, and L220. Catalysis depends on E271, which acts as the Proton acceptor.

It belongs to the diacylglycerol/lipid kinase family. YegS lipid kinase subfamily. Requires Mg(2+) as cofactor. Ca(2+) is required as a cofactor.

It is found in the cytoplasm. In terms of biological role, probably phosphorylates lipids; the in vivo substrate is unknown. The protein is Probable lipid kinase YegS of Escherichia coli O127:H6 (strain E2348/69 / EPEC).